Reading from the N-terminus, the 289-residue chain is Cbb3-type cytochrome c oxidase subunit FixP (289 aa).

Residues 1 to 33 lie on the Cytoplasmic side of the membrane; sequence MADKHKHVDEVSGVETTGHEWDGIRELNNPLPR. Residues 34 to 56 form a helical membrane-spanning segment; the sequence is WWVYSFYATIIWAIGYAVAYPSW. The Periplasmic segment spans residues 57-289; the sequence is PMLTEATKGV…VFVHSLGGGE (233 aa). 2 Cytochrome c domains span residues 110-198 and 205-286; these read FAVS…MSLT and HLVE…HSLG. 8 residues coordinate heme c: Cys123, Cys126, His127, Met175, Cys218, Cys221, His222, and Met263.

Belongs to the CcoP / FixP family. As to quaternary structure, component of the cbb3-type cytochrome c oxidase at least composed of FixN, FixO, FixQ and FixP. Heme c serves as cofactor.

The protein resides in the cell inner membrane. It participates in energy metabolism; oxidative phosphorylation. Functionally, C-type cytochrome. Part of the cbb3-type cytochrome c oxidase complex. FixP subunit is required for transferring electrons from donor cytochrome c via its heme groups to FixO subunit. From there, electrons are shuttled to the catalytic binuclear center of FixN subunit where oxygen reduction takes place. The complex also functions as a proton pump. This Sinorhizobium medicae (strain WSM419) (Ensifer medicae) protein is Cbb3-type cytochrome c oxidase subunit FixP.